We begin with the raw amino-acid sequence, 83 residues long: Small ribosomal subunit protein eS27 (83 aa).

The C4-type zinc-finger motif lies at 37–59 (CSGCFKISTVFSHATTVVVCVGC).

This sequence belongs to the eukaryotic ribosomal protein eS27 family. Zn(2+) serves as cofactor.

The chain is Small ribosomal subunit protein eS27 (rps-27) from Caenorhabditis elegans.